A 437-amino-acid chain; its full sequence is GTPase Obg (437 aa).

Residues 2–161 (SDFIDRALIT…RELQLELKVI (160 aa)) form the Obg domain. Positions 162-335 (ADVGLVGFPN…LQRRIVDILR (174 aa)) constitute an OBG-type G domain. Residues 168-175 (GFPNAGKS), 193-197 (FTTLS), 214-217 (DIPG), 284-287 (NKTD), and 316-318 (SAA) each bind GTP. Positions 175 and 195 each coordinate Mg(2+). The OCT domain maps to 355–433 (FSNIDPNDFW…IEKAELLWQD (79 aa)).

Belongs to the TRAFAC class OBG-HflX-like GTPase superfamily. OBG GTPase family. As to quaternary structure, monomer. It depends on Mg(2+) as a cofactor.

It is found in the cytoplasm. An essential GTPase which binds GTP, GDP and possibly (p)ppGpp with moderate affinity, with high nucleotide exchange rates and a fairly low GTP hydrolysis rate. Plays a role in control of the cell cycle, stress response, ribosome biogenesis and in those bacteria that undergo differentiation, in morphogenesis control. The protein is GTPase Obg of Herpetosiphon aurantiacus (strain ATCC 23779 / DSM 785 / 114-95).